A 161-amino-acid chain; its full sequence is Blue copper protein 1a (161 aa).

The signal sequence occupies residues 1 to 23 (MASSRVVLILSISMVLLSSVAIA). One can recognise a Phytocyanin domain in the interval 24 to 124 (TDHIVGDDKG…QMKLVITVLA (101 aa)). A Cu cation-binding site is contributed by His64. N-linked (GlcNAc...) asparagine glycosylation occurs at Asn70. Cys77 and Cys111 are disulfide-bonded. Cu cation is bound by residues Cys105, His110, and Met116. The chain crosses the membrane as a helical span at residues 141-161 (VVSSLFGVVMAIMVAIAVIFA).

Its subcellular location is the membrane. This Medicago truncatula (Barrel medic) protein is Blue copper protein 1a.